Reading from the N-terminus, the 247-residue chain is Cell division protein ZapD (247 aa).

It belongs to the ZapD family. In terms of assembly, interacts with FtsZ.

The protein resides in the cytoplasm. Cell division factor that enhances FtsZ-ring assembly. Directly interacts with FtsZ and promotes bundling of FtsZ protofilaments, with a reduction in FtsZ GTPase activity. This Shigella sonnei (strain Ss046) protein is Cell division protein ZapD.